Consider the following 356-residue polypeptide: Phosphoribosyl pyrophosphate synthase-associated protein 1 (356 aa).

Residue methionine 1 is modified to N-acetylmethionine. 2 positions are modified to phosphoserine: serine 177 and serine 215.

It belongs to the ribose-phosphate pyrophosphokinase family. As to quaternary structure, binds to PRPS1 and PRPS2. As to expression, ubiquitous.

In terms of biological role, seems to play a negative regulatory role in 5-phosphoribose 1-diphosphate synthesis. The chain is Phosphoribosyl pyrophosphate synthase-associated protein 1 (Prpsap1) from Rattus norvegicus (Rat).